Consider the following 56-residue polypeptide: UPF0434 protein ECH_0194 (56 aa).

This sequence belongs to the UPF0434 family.

The sequence is that of UPF0434 protein ECH_0194 from Ehrlichia chaffeensis (strain ATCC CRL-10679 / Arkansas).